Here is a 181-residue protein sequence, read N- to C-terminus: MNSSWRVVVFLGLVILCHSRRARACNGGYEMIVHSIENCAGEGQIVTIDPKSTVTLMEDCKVKSKATARTVGFKTAMMDVTITKNGLPVLKETVDICANLEEASGNKEAAEIITMFGVPDHCPVAASEIRTDESQTYSLEKYKQHLLVAQGRSIIDVLVKHDKGESCFKIDMEVTSPNLIG.

Residues 1–24 (MNSSWRVVVFLGLVILCHSRRARA) form the signal peptide.

Salivary gland (at protein level). In terms of tissue distribution, (Microbial infection) Detected with Plasmodium berghei sporozoites isolated from the saliva of infected Anopheles gambiae mosquitoes (at protein level).

The protein resides in the secreted. In terms of biological role, decreases host neutrophil chemotaxis induced by N-formylmethionine-leucyl-phenylalanine (fMLP). (Microbial infection) Interacts with the surface of Plasmodium berghei sporozoites. Enhances sporozoite gliding activity. Enhances host hepatocyte traversal by sporozoites. In Anopheles gambiae (African malaria mosquito), this protein is Sporozoite-associated mosquito saliva protein 1.